We begin with the raw amino-acid sequence, 521 residues long: MSLLPDRERAPDGDISPQEMVPSRKNVVLVDGVILNGPATDVKAGEKFVEDACRLIMEEVVLKATDINEKVCEWRPPEELKRLLDLELRDAGEPHHRLLQRCQDVIRYSVKTNHPRFFNQLYAGLDYYSLVARFMTEALNPSVYTYEVSPVFLLVEEAVLKKMIEFIGWKEGDGIFNPGGSVSNMYAMNLARYKYCPDIKEKGLSGLPRLILFTSAECHYSMKKSASFLGIGTENVCFVETDGRGKMIPEELEKRVQEAKKEGAAPFLVCATSGTTVLGAFDPLDEIADICERHGLWLHVDASWGGSALMSRKHRRLLQGIHRADSVAWNPHKMLMAGIQCCAFLVKDKSDLLKRCYSANASYLFQQDKFYDVSYDTGDKSIQCSRRPDAFKFWLAWKALGTLGLEERVNRALALSRYLVEEIKKREGFKLLMEPEYANICFWYIPPSLRQMEEGPEFWAKLHLVAPAIKERMMKKGSLMLGYQPHQGKVNFFRQVVISPQVSREDMDFLLDEIDLLGKDM.

Positions 1 to 12 (MSLLPDRERAPD) are enriched in basic and acidic residues. The tract at residues 1–20 (MSLLPDRERAPDGDISPQEM) is disordered. K333 is subject to N6-(pyridoxal phosphate)lysine.

This sequence belongs to the group II decarboxylase family. In terms of assembly, homodimer. Pyridoxal 5'-phosphate is required as a cofactor. Expressed at highest levels in skeletal muscles. Also detected heart, spleen and rumen.

The catalysed reaction is L-aspartate + H(+) = beta-alanine + CO2. It catalyses the reaction 3-sulfino-L-alanine + H(+) = hypotaurine + CO2. It carries out the reaction L-cysteate + H(+) = taurine + CO2. Its function is as follows. Catalyzes the decarboxylation of L-aspartate, 3-sulfino-L-alanine (cysteine sulfinic acid), and L-cysteate to beta-alanine, hypotaurine and taurine, respectively. The preferred substrate is L-aspartate. Does not exhibit any decarboxylation activity toward glutamate. This Bos taurus (Bovine) protein is Acidic amino acid decarboxylase GADL1 (GADL1).